A 540-amino-acid polypeptide reads, in one-letter code: Peptide chain release factor 3 (540 aa).

A tr-type G domain is found at E14–G283. GTP-binding positions include S23–T30, D91–H95, and N145–D148.

This sequence belongs to the TRAFAC class translation factor GTPase superfamily. Classic translation factor GTPase family. PrfC subfamily.

The protein localises to the cytoplasm. Increases the formation of ribosomal termination complexes and stimulates activities of RF-1 and RF-2. It binds guanine nucleotides and has strong preference for UGA stop codons. It may interact directly with the ribosome. The stimulation of RF-1 and RF-2 is significantly reduced by GTP and GDP, but not by GMP. The sequence is that of Peptide chain release factor 3 from Trichormus variabilis (strain ATCC 29413 / PCC 7937) (Anabaena variabilis).